We begin with the raw amino-acid sequence, 267 residues long: Regulatory protein RecX (267 aa).

Belongs to the RecX family.

The protein localises to the cytoplasm. Functionally, modulates RecA activity. The chain is Regulatory protein RecX from Staphylococcus epidermidis (strain ATCC 12228 / FDA PCI 1200).